The chain runs to 362 residues: 3-dehydroquinate synthase (362 aa).

NAD(+) is bound by residues 71 to 76, 105 to 109, 129 to 130, K142, K151, and 169 to 172; these read DGEQYK, GVVGD, TT, and CLKT. E184, H247, and H264 together coordinate Zn(2+).

It belongs to the sugar phosphate cyclases superfamily. Dehydroquinate synthase family. It depends on Co(2+) as a cofactor. Requires Zn(2+) as cofactor. NAD(+) is required as a cofactor.

The protein resides in the cytoplasm. It catalyses the reaction 7-phospho-2-dehydro-3-deoxy-D-arabino-heptonate = 3-dehydroquinate + phosphate. Its pathway is metabolic intermediate biosynthesis; chorismate biosynthesis; chorismate from D-erythrose 4-phosphate and phosphoenolpyruvate: step 2/7. Catalyzes the conversion of 3-deoxy-D-arabino-heptulosonate 7-phosphate (DAHP) to dehydroquinate (DHQ). This is 3-dehydroquinate synthase from Escherichia coli (strain 55989 / EAEC).